The sequence spans 177 residues: Adenine phosphoribosyltransferase (177 aa).

The protein belongs to the purine/pyrimidine phosphoribosyltransferase family. As to quaternary structure, homodimer.

The protein localises to the cytoplasm. It carries out the reaction AMP + diphosphate = 5-phospho-alpha-D-ribose 1-diphosphate + adenine. It functions in the pathway purine metabolism; AMP biosynthesis via salvage pathway; AMP from adenine: step 1/1. Its function is as follows. Catalyzes a salvage reaction resulting in the formation of AMP, that is energically less costly than de novo synthesis. This Anaeromyxobacter sp. (strain Fw109-5) protein is Adenine phosphoribosyltransferase.